A 326-amino-acid chain; its full sequence is NDRG-like protein (326 aa).

The protein belongs to the NDRG family.

In Dictyostelium discoideum (Social amoeba), this protein is NDRG-like protein.